The sequence spans 361 residues: 4-hydroxytryptamine kinase (361 aa).

ATP contacts are provided by residues Asn37, Lys57, and 118–120; that span reads QDV. Residue Asp224 is part of the active site. 248-250 is a binding site for ATP; sequence DWE.

The protein belongs to the methylthioribose kinase family. As to quaternary structure, monomer. The cofactor is Mg(2+).

It carries out the reaction 4-hydroxytryptamine + ATP = norbaeocystin + ADP + H(+). It catalyses the reaction psilocin + ATP = psilocybin + ADP + H(+). The enzyme catalyses 4-hydroxy-N,N,N-trimethyltryptamine + ATP = aeruginascin + ADP + H(+). Its pathway is secondary metabolite biosynthesis. Its function is as follows. 4-hydroxytryptamine kinase; part of the gene cluster that mediates the biosynthesis of psilocybin, a psychotropic tryptamine-derived natural product. The first step in the pathway is the decarboxylation of L-tryptophan to tryptamine by the decarboxylase psiD. PsiD does not decarboxylate phenylalanine, tyrosine, or 5-hydroxy- L -tryptophan (5-HTP). 4-hydroxy-L-tryptophan is accepted as substrate by psiD as well. The cytochrome P450 monooxygenase psiH then converts tryptamine to 4-hydroxytryptamine. The kinase psiK catalyzes the 4-O-phosphorylation step by converting 4-hydroxytryptamine into norbaeocystin. The methyltransferase psiM then catalyzes iterative methyl transfer to the amino group of norbaeocystin to yield psilocybin via a monomethylated intermediate, baeocystin. 4-hydroxy-6-methyl-l-tryptophancan also be converted the decarboxylase PsiD, kinase PsiK, and methyltransferase PsiM into respectively 6-methyl-norbaeocystin, 6-methylbaeocystin, and 6-methylpsilocybin. PsiK kinase can also turn psilocin into psilocybin. This activity may represent a protective mechanism to rephosphorylate the unstable psilocin to the stable psilocybin in case of intracellular ester cleavage. Moreover, psiK is able to O-phosphorylate the quaternary amine 4-hydroxy-N,N,N-trimethyltryptamine (4-OH-TMT) to yield aeruginascin, another bioactive compound found in Psilocybe species. This Psilocybe cyanescens protein is 4-hydroxytryptamine kinase.